Here is a 523-residue protein sequence, read N- to C-terminus: Signal peptide peptidase-like 2A (523 aa).

Positions 1–25 are cleaved as a signal peptide; it reads MGLLHSLHAPAAALLWSCLLGLAAA. The Lumenal portion of the chain corresponds to 26-175; sequence QEAILHASTN…PSWPNFDYTL (150 aa). N-linked (GlcNAc...) asparagine glycans are attached at residues Asn51, Asn61, Asn69, Asn119, Asn129, and Asn135. The PA domain maps to 70–155; that stretch reads LTGTALCHLS…KDFKDMKETL (86 aa). Residues 176-196 form a helical membrane-spanning segment; that stretch reads VVIFVIAVFTVALGGYWSGLI. At 197–224 the chain is on the cytoplasmic side; that stretch reads ELENMKSVEDAEDRETRKKKDDYLTFSP. The chain crosses the membrane as a helical span at residues 225–245; the sequence is LTVVVFVVICCIMIVLLYFFY. Residues 246 to 247 lie on the Lumenal side of the membrane; the sequence is RW. Residues 248–268 form a helical membrane-spanning segment; it reads LVYVMIAIFCIASSMSLYNCL. Residues 269 to 288 lie on the Cytoplasmic side of the membrane; sequence SALIHRMPCGQCTILCCGKN. A helical membrane pass occupies residues 289-309; sequence IKVSLIFLSGLCISVAVVWAV. Residues 310–315 lie on the Lumenal side of the membrane; sequence FRNEDR. A helical membrane pass occupies residues 316–336; it reads WAWILQDILGIAFCLNLIKTM. At 337 to 344 the chain is on the cytoplasmic side; that stretch reads KLPNFMSC. The helical transmembrane segment at 345 to 365 threads the bilayer; sequence VILLGLLLIYDVFFVFITPFI. Asp355 is an active-site residue. Topologically, residues 366 to 403 are lumenal; sequence TKNGESIMVELAAGPFENAEKLPVVIRVPKLMGYSVMS. Residues 404 to 424 traverse the membrane as a helical segment; the sequence is VCSVPVSVLGFGDIIVPGLLI. The active site involves Asp416. Residues 425-440 are Cytoplasmic-facing; it reads AYCRRFDVQTGSSIYY. A helical transmembrane segment spans residues 441-461; that stretch reads ISSTIAYAVGMIITFVVLMVM. Residues 462 to 463 are Lumenal-facing; the sequence is KT. A helical membrane pass occupies residues 464–484; sequence GQPALLYLVPCTLITVSVVAW. The short motif at 466–468 is the PAL element; it reads PAL. Over 485 to 523 the chain is Cytoplasmic; it reads SRKEMKKFWKGSSYQVMDHLDYSTNEENPVTTDEQIVQQ. Residues 498–501 carry the YXXo lysosomal targeting motif motif; it reads YQVM.

It belongs to the peptidase A22B family. In terms of assembly, interacts with ITM2B. Glycosylated.

It is found in the late endosome membrane. It localises to the lysosome membrane. The protein resides in the membrane. Intramembrane-cleaving aspartic protease (I-CLiP) that cleaves type II membrane signal peptides in the hydrophobic plane of the membrane. Functions in FASLG, ITM2B and TNF processing. Catalyzes the intramembrane cleavage of the anchored fragment of shed TNF-alpha (TNF), which promotes the release of the intracellular domain (ICD) for signaling to the nucleus. Also responsible for the intramembrane cleavage of Fas antigen ligand FASLG, which promotes the release of the intracellular FasL domain (FasL ICD). Essential for degradation of the invariant chain CD74 that plays a central role in the function of antigen-presenting cells in the immune system. Plays a role in the regulation of innate and adaptive immunity. This is Signal peptide peptidase-like 2A from Mus musculus (Mouse).